The primary structure comprises 274 residues: MSTYLIGDIHGCYHELQSLLDQVQFNPETDQLWLTGDLVARGPDSLEVLRFVRALGNCVRLVLGNHDLHLLAVYAGIGRNKTKDRLSDLLEADDVDELINWLRRQPLIQVDEEKKLVMAHAGITPQWDIATAQACAREVEAVLGSDTYPLFLNAMYGDMPNSWSPELGGLARLRFSTNALTRMRYCFPNGQLDMIAKEPPDSAPPPLKPWFDIPGPVSRDYTIVFGHWASLEGKGTPEGIVGLDTGCCWGGNLSMLRWEDKQMFIQPSRREKQL.

Belongs to the Ap4A hydrolase family.

The enzyme catalyses P(1),P(4)-bis(5'-adenosyl) tetraphosphate + H2O = 2 ADP + 2 H(+). Functionally, hydrolyzes diadenosine 5',5'''-P1,P4-tetraphosphate to yield ADP. In Erwinia tasmaniensis (strain DSM 17950 / CFBP 7177 / CIP 109463 / NCPPB 4357 / Et1/99), this protein is Bis(5'-nucleosyl)-tetraphosphatase, symmetrical.